A 138-amino-acid chain; its full sequence is Probable DNA-directed RNA polymerases I, II, and III subunit RPABC2 (138 aa).

2 stretches are compositionally biased toward acidic residues: residues 1-27 (MADDDDYQDMDNDDFVDDNEMEDVIEE) and 35-46 (EEEDDDNNVDEN). The tract at residues 1-46 (MADDDDYQDMDNDDFVDDNEMEDVIEEEQQRPDHEEEDDDNNVDEN) is disordered.

The protein belongs to the archaeal Rpo6/eukaryotic RPB6 RNA polymerase subunit family. In terms of assembly, component of the RNA polymerase I (Pol I), RNA polymerase II (Pol II) and RNA polymerase III (Pol III) complexes consisting of at least 13, 12 and 17 subunits, respectively.

The protein resides in the nucleus. DNA-dependent RNA polymerases catalyze the transcription of DNA into RNA using the four ribonucleoside triphosphates as substrates. Common component of RNA polymerases I, II and III which synthesize ribosomal RNA precursors, mRNA precursors and many functional non-coding RNAs, and small RNAs, such as 5S rRNA and tRNAs, respectively. Pol II is the central component of the basal RNA polymerase II transcription machinery. Pols are composed of mobile elements that move relative to each other. In Pol II, RPB6 is part of the clamp element and together with parts of RPB1 and RPB2 forms a pocket to which the RPB4-RPB7 subcomplex binds. The sequence is that of Probable DNA-directed RNA polymerases I, II, and III subunit RPABC2 from Caenorhabditis briggsae.